The primary structure comprises 30 residues: Cyclotide mech-1 (30 aa).

The cyclopeptide (Gly-Asp) cross-link spans 1-30 (GVIPCGESCVFIPCINKKKCSCKNKVCYRD). 3 cysteine pairs are disulfide-bonded: cysteine 5–cysteine 20, cysteine 9–cysteine 22, and cysteine 14–cysteine 27.

This is a cyclic peptide. In terms of processing, contains 3 disulfide bonds.

In terms of biological role, probably participates in a plant defense mechanism (Potential). Binds to and induces leakage in phospholipd membranes, particularly ones containing 1-palmitoyl-2-oleophosphatidylethanolamine (POPE). Not active against Gram-negative bacterium E.coli ATCC 25922 or Gram-positive bacterium S.aureus ATCC 25923 up to a concentration of 64 uM. This chain is Cyclotide mech-1, found in Melicytus chathamicus (Chatham Island mahoe).